Here is a 245-residue protein sequence, read N- to C-terminus: Tetraspanin-6 (245 aa).

Over 1–19 (MASPSRRLQTKPVITCLKS) the chain is Cytoplasmic. The chain crosses the membrane as a helical span at residues 20–40 (VLLIYTFIFWITGVILLAVGI). Residues 41-59 (WGKVSLENYFSLLNEKATN) are Extracellular-facing. The helical transmembrane segment at 60–80 (VPFVLIGTGTVIILLGTFGCF) threads the bilayer. At 81–93 (ATCRTSAWMLKLY) the chain is on the cytoplasmic side. A helical membrane pass occupies residues 94–114 (AMFLTLIFLVELVAAIVGFVF). Residues 115-208 (RHEIKNSFKS…IKVMTTIESE (94 aa)) are Extracellular-facing. An N-linked (GlcNAc...) asparagine glycan is attached at N134. Residues 209 to 229 (MGVVAGISFGVACFQLIGIFL) traverse the membrane as a helical segment. The Cytoplasmic segment spans residues 230–245 (AYCLSRAITNNQYEIV).

Belongs to the tetraspanin (TM4SF) family.

It is found in the membrane. This chain is Tetraspanin-6 (Tspan6), found in Mus musculus (Mouse).